A 139-amino-acid chain; its full sequence is Cystatin cpi-1 (139 aa).

Positions 1-19 (MRFILLIALVFAVLDGINC) are cleaved as a signal peptide. An N-linked (GlcNAc...) asparagine glycan is attached at N29. The Secondary area of contact signature appears at 65–69 (QVVAG). A disulfide bridge links C83 with C99.

It belongs to the cystatin family.

In terms of biological role, cysteine protease inhibitor which inhibits members of the peptidase C1 family. Does not inhibit asparaginyl endopeptidase. May play a protective role against exogenous cysteine proteases derived from soil bacteria or fungi, or rotting fruits and vegetation. This chain is Cystatin cpi-1, found in Caenorhabditis elegans.